We begin with the raw amino-acid sequence, 335 residues long: Basic endochitinase B (335 aa).

Residues 1–33 form the signal peptide; the sequence is MPPQKENHRTLNKMKTNLFLFLIFSLLLSLSSA. A Chitin-binding type-1 domain is found at 34-75; that stretch reads EQCGRQAGGALCPNGLCCSEFGWCGNTEPYCKQPGCQSQCTP. 7 disulfides stabilise this stretch: cysteine 36–cysteine 51, cysteine 45–cysteine 57, cysteine 50–cysteine 64, cysteine 69–cysteine 73, cysteine 107–cysteine 169, cysteine 181–cysteine 189, and cysteine 288–cysteine 320. Glutamate 151 serves as the catalytic Proton donor. A propeptide spans 329–335 (removed in mature form); that stretch reads GLLEAAI. The short motif at 329–335 is the Vacuolar targeting signal element; sequence GLLEAAI.

It belongs to the glycosyl hydrolase 19 family. Chitinase class I subfamily. As to expression, high constitutive level in roots with lower levels in leaves and flowering shoots.

It localises to the vacuole. It carries out the reaction Random endo-hydrolysis of N-acetyl-beta-D-glucosaminide (1-&gt;4)-beta-linkages in chitin and chitodextrins.. In terms of biological role, defense against chitin-containing fungal pathogens. Seems particularly implicated in resistance to jasmonate-inducing pathogens such as A.brassicicola. In vitro antifungal activity against T.reesei, but not against A.solani, F.oxysporum, S.sclerotiorum, G.graminis and P.megasperma. The sequence is that of Basic endochitinase B (CHI-B) from Arabidopsis thaliana (Mouse-ear cress).